The sequence spans 191 residues: GDP-mannose pyrophosphatase (191 aa).

GDP-alpha-D-mannose is bound by residues tyrosine 17, 38 to 40 (KRE), arginine 67, and 85 to 87 (AGL). The 138-residue stretch at 43-180 (DRGNGATILL…EIRDGKTVLL (138 aa)) folds into the Nudix hydrolase domain. Residues alanine 85, glutamate 100, and glutamate 104 each coordinate Mg(2+). The short motif at 86-106 (GLLDNDEPEVCIRKEAIEETG) is the Nudix box element. GDP-alpha-D-mannose is bound by residues glutamate 104, glutamate 127, 150–151 (DE), and lysine 176. Residue glutamate 151 coordinates Mg(2+).

Belongs to the Nudix hydrolase family. NudK subfamily. In terms of assembly, homodimer. It depends on Mg(2+) as a cofactor.

The catalysed reaction is GDP-alpha-D-mannose + H2O = alpha-D-mannose 1-phosphate + GMP + 2 H(+). Functionally, nucleoside diphosphate sugar hydrolase that hydrolyzes GDP-mannose as its preferred substrate, yielding GMP and mannose-1-phosphate. The polypeptide is GDP-mannose pyrophosphatase (nudK) (Salmonella arizonae (strain ATCC BAA-731 / CDC346-86 / RSK2980)).